A 198-amino-acid chain; its full sequence is Ribonuclease HII (198 aa).

The 185-residue stretch at 14-198 folds into the RNase H type-2 domain; it reads HMIVGVDEAG…FAPVAQLQLV (185 aa). Residues Asp20, Glu21, and Asp110 each coordinate a divalent metal cation.

Belongs to the RNase HII family. It depends on Mn(2+) as a cofactor. Requires Mg(2+) as cofactor.

The protein localises to the cytoplasm. The enzyme catalyses Endonucleolytic cleavage to 5'-phosphomonoester.. In terms of biological role, endonuclease that specifically degrades the RNA of RNA-DNA hybrids. This Sphingopyxis alaskensis (strain DSM 13593 / LMG 18877 / RB2256) (Sphingomonas alaskensis) protein is Ribonuclease HII.